The primary structure comprises 310 residues: HPr kinase/phosphorylase (310 aa).

Catalysis depends on residues H138 and K159. 153-160 is a binding site for ATP; that stretch reads GDSGIGKS. Position 160 (S160) interacts with Mg(2+). D177 serves as the catalytic Proton acceptor; for phosphorylation activity. Proton donor; for dephosphorylation activity. The segment at 201–210 is important for the catalytic mechanism of both phosphorylation and dephosphorylation; it reads LEIRGVGIID. E202 lines the Mg(2+) pocket. R243 is a catalytic residue. The important for the catalytic mechanism of dephosphorylation stretch occupies residues 264–269; it reads PVQTGR.

This sequence belongs to the HPrK/P family. Homohexamer. Requires Mg(2+) as cofactor. The cofactor is Mn(2+).

It catalyses the reaction [HPr protein]-L-serine + ATP = [HPr protein]-O-phospho-L-serine + ADP + H(+). The enzyme catalyses [HPr protein]-O-phospho-L-serine + phosphate + H(+) = [HPr protein]-L-serine + diphosphate. Kinase activity is inhibited by inorganic phosphate (Pi). In contrast to many other bacteria, neither kinase activity nor phosphorylase activity is affected by fructose 1,6-bisphosphate (FBP). Its function is as follows. Catalyzes the ATP- as well as probably the pyrophosphate-dependent phosphorylation of 'Ser-46' in HPr, a phosphocarrier protein of the phosphoenolpyruvate-dependent sugar phosphotransferase system (PTS). HprK/P also catalyzes the pyrophosphate-producing, inorganic phosphate-dependent dephosphorylation (phosphorolysis) of seryl-phosphorylated HPr (P-Ser-HPr). The two antagonistic activities of HprK/P are regulated by several intracellular metabolites, which change their concentration in response to the absence or presence of rapidly metabolisable carbon sources (glucose, fructose, etc.) in the growth medium. Therefore, by controlling the phosphorylation state of HPr, the HPrK/P is a sensor enzyme that plays a major role in the regulation of carbon metabolism and sugar transport: it probably mediates carbon catabolite repression (CCR), and regulates PTS-catalyzed carbohydrate uptake and inducer exclusion. The protein is HPr kinase/phosphorylase (hprK) of Streptococcus equinus (Streptococcus bovis).